A 302-amino-acid polypeptide reads, in one-letter code: Deoxyhypusine hydroxylase (302 aa).

HEAT-like PBS-type repeat units follow at residues 23 to 49 (ERFRALFTLKNIGGKTAIDAISKAFDD), 54 to 80 (LKHELAYCLGQMQDPTALEILTKVLKD), 87 to 113 (VRHEAAEAMGAIGHADVLAILEEYKKD), 175 to 201 (DRYRAMFSLRNLCTEESVLAIAEGLKD), 206 to 232 (FRHEVAFVLGQLQEPCSIPYLQENLED), and 239 to 265 (VRHECAEALGAIATDDCIQILTRYADD). Fe cation is bound by residues H56, E57, H89, and E90. Residues H208, E209, H241, and E242 each contribute to the Fe cation site.

Belongs to the deoxyhypusine hydroxylase family. Requires Fe(2+) as cofactor.

The protein resides in the endoplasmic reticulum membrane. The catalysed reaction is [eIF5A protein]-deoxyhypusine + AH2 + O2 = [eIF5A protein]-hypusine + A + H2O. The protein operates within protein modification; eIF5A hypusination. In terms of biological role, catalyzes the hydroxylation of the N(6)-(4-aminobutyl)-L-lysine intermediate to form hypusine, an essential post-translational modification only found in mature eIF-5A factor. Essential for organismal viability and plays a role in a wide number of important processes such as cell growth and proliferation, and regulates induction of autophagy and protein synthesis. Has a role in eIF-5A-mediated translational control. This is Deoxyhypusine hydroxylase from Drosophila pseudoobscura pseudoobscura (Fruit fly).